Consider the following 705-residue polypeptide: Complement C1r subcomponent (705 aa).

The signal sequence occupies residues 1 to 17; the sequence is MWLLYLLVPALFCRAGG. Residues 18-141 form the CUB 1 domain; that stretch reads SIPIPQKLFG…KGFLAYYQAV (124 aa). Ca(2+) contacts are provided by Glu66, Asp74, and Asp119. Residues Cys71 and Cys89 are joined by a disulfide bond. Asn125 carries an N-linked (GlcNAc...) asparagine glycan. Ca(2+) contacts are provided by Asp142, Leu143, and Glu145. Residues 142–190 enclose the EGF-like; calcium-binding domain; that stretch reads DLDECASRSKSGEEDPQPQCQHLCHNYVGGYFCSCRPGYELQEDTHSCQ. 4 disulfide bridges follow: Cys146–Cys165, Cys161–Cys174, Cys176–Cys189, and Cys193–Cys220. Ca(2+) contacts are provided by Asn167, Tyr168, and Gly171. Residue Asn167 is modified to (3R)-3-hydroxyasparagine. One can recognise a CUB 2 domain in the interval 193-305; the sequence is CSSELYTEAS…RGWKLRYTTE (113 aa). Ser206 carries the phosphoserine; by CK2 modification. The N-linked (GlcNAc...) asparagine glycan is linked to Asn221. Residues Asp243, Asp253, Asp290, and Asp294 each contribute to the Ca(2+) site. A disulfide bond links Cys250 and Cys268. Sushi domains lie at 307–373 and 374–449; these read IKCP…RCKI and KDCG…RCLP. Cystine bridges form between Cys309–Cys358, Cys338–Cys371, Cys376–Cys429, Cys406–Cys447, and Cys451–Cys577. In terms of domain architecture, Peptidase S1 spans 464-702; it reads IIGGQKAKMG…YVDWIKKEME (239 aa). The active-site Charge relay system is His502. A glycan (N-linked (GlcNAc...) asparagine) is linked at Asn514. Asp557 acts as the Charge relay system in catalysis. Asn581 carries N-linked (GlcNAc...) asparagine glycosylation. 2 disulfide bridges follow: Cys620–Cys639 and Cys650–Cys680. The active-site Charge relay system is Ser654.

The protein belongs to the peptidase S1 family. Core component of the complement C1 complex, a calcium-dependent complex composed of 1 molecule of the C1Q subcomplex, 2 molecules of C1R and 2 molecules of C1S. The C1Q subcomplex is composed 18 subunits: 3 chains of C1QA, C1QB, and C1QC trimerize to form 6 collagen-like triple helices connected to six globular ligand-recognition modules. Within the C1 complex, C1R is a dimer of identical chains, each of which is activated by cleavage into two chains, heavy and light, connected by disulfide bonds. Cleaved and activated by autocatalytic processing to generate Complement C1r subcomponent heavy and light chains that are connected by disulfide bonds. In terms of processing, the iron and 2-oxoglutarate dependent 3-hydroxylation of aspartate and asparagine is (R) stereospecific within EGF domains.

It localises to the secreted. The protein resides in the cell surface. It carries out the reaction Selective cleavage of Lys(or Arg)-|-Ile bond in complement subcomponent C1s to form the active form of C1s (EC 3.4.21.42).. With respect to regulation, activated by the C1Q subcomplex of the C1 complex following C1Q binding to immunoglobulins (IgG or IgM) complexed with antigens to form antigen-antibody complexes on the surface of pathogens. Immunoglobulin-binding promotes autoactivation of C1R, which results in the cleavage of the Arg-Ile bond in the catalytic domain. Functionally, serine protease component of the complement C1 complex, a multiprotein complex that initiates the classical pathway of the complement system, a cascade of proteins that leads to phagocytosis and breakdown of pathogens and signaling that strengthens the adaptive immune system. C1R catalyzes the first enzymatic step in the classical complement pathway: it is activated by the C1Q subcomplex of the C1 complex, which associates with IgG or IgM immunoglobulins complexed with antigens to form antigen-antibody complexes on the surface of pathogens. Immunoglobulin-binding promotes the autocatalytic cleavage and activation of C1R. Activated C1R then cleaves and activates C1S, the second protease of the classical complement pathway. It is unclear if C1R activates C1S within single, strained C1 complexes or between neighboring C1 complexes on surfaces. The chain is Complement C1r subcomponent from Homo sapiens (Human).